The chain runs to 304 residues: Phosphatidylserine decarboxylase proenzyme (304 aa).

Residues Asp90, His147, and Ser253 each act as charge relay system; for autoendoproteolytic cleavage activity in the active site. Ser253 functions as the Schiff-base intermediate with substrate; via pyruvic acid; for decarboxylase activity in the catalytic mechanism. Residue Ser253 is modified to Pyruvic acid (Ser); by autocatalysis.

It belongs to the phosphatidylserine decarboxylase family. PSD-B subfamily. Prokaryotic type I sub-subfamily. As to quaternary structure, heterodimer of a large membrane-associated beta subunit and a small pyruvoyl-containing alpha subunit. Pyruvate is required as a cofactor. In terms of processing, is synthesized initially as an inactive proenzyme. Formation of the active enzyme involves a self-maturation process in which the active site pyruvoyl group is generated from an internal serine residue via an autocatalytic post-translational modification. Two non-identical subunits are generated from the proenzyme in this reaction, and the pyruvate is formed at the N-terminus of the alpha chain, which is derived from the carboxyl end of the proenzyme. The autoendoproteolytic cleavage occurs by a canonical serine protease mechanism, in which the side chain hydroxyl group of the serine supplies its oxygen atom to form the C-terminus of the beta chain, while the remainder of the serine residue undergoes an oxidative deamination to produce ammonia and the pyruvoyl prosthetic group on the alpha chain. During this reaction, the Ser that is part of the protease active site of the proenzyme becomes the pyruvoyl prosthetic group, which constitutes an essential element of the active site of the mature decarboxylase.

The protein resides in the cell membrane. It carries out the reaction a 1,2-diacyl-sn-glycero-3-phospho-L-serine + H(+) = a 1,2-diacyl-sn-glycero-3-phosphoethanolamine + CO2. Its pathway is phospholipid metabolism; phosphatidylethanolamine biosynthesis; phosphatidylethanolamine from CDP-diacylglycerol: step 2/2. Its function is as follows. Catalyzes the formation of phosphatidylethanolamine (PtdEtn) from phosphatidylserine (PtdSer). The polypeptide is Phosphatidylserine decarboxylase proenzyme (Dickeya dadantii (strain 3937) (Erwinia chrysanthemi (strain 3937))).